Consider the following 1804-residue polypeptide: Collagen alpha-1(XI) chain (1804 aa).

Residues 1 to 34 form the signal peptide; it reads MEPWSRWKTKRWIWDLTISTLVLTFLFQAREVRG. A propeptide spans 35–511 (N-terminal propeptide); the sequence is AAPVDILKAL…SKGPTISAQE (477 aa). 2 disulfides stabilise this stretch: cysteine 60-cysteine 242 and cysteine 181-cysteine 235. One can recognise a Laminin G-like domain in the interval 70 to 242; that stretch reads DIAYRVTEEA…DYCDHYSPDC (173 aa). The interval 229–417 is nonhelical region; sequence KAAYDYCDHY…DFTETSINGH (189 aa). Asparagine 351 carries N-linked (GlcNAc...) asparagine glycosylation. The tract at residues 418–506 is triple-helical region (interrupted); it reads GAYGEKGQKG…YGGDGSKGPT (89 aa). The tract at residues 437 to 506 is disordered; sequence LVEGPPGPAG…YGGDGSKGPT (70 aa). Positions 440–488 constitute a Collagen-like 1 domain; the sequence is GPPGPAGPAGLMGPPGLQGPSGLPGDPGDRGPPGRPGLPGADGLPGPPG. Composition is skewed to low complexity over residues 447–465 and 477–494; these read PAGLMGPPGLQGPSGLPGD and LPGADGLPGPPGTMLMLP. The short nonhelical segment stretch occupies residues 507 to 509; sequence ISA. The segment at 510 to 527 is telopeptide; that stretch reads QEAQAQAILQQARIALRG. Residues 526 to 1560 form a disordered region; it reads RGPPGPMGLT…KTRRHTESIQ (1035 aa). A triple-helical region region spans residues 528-1540; that stretch reads PPGPMGLTGR…PGPPGPPGEV (1013 aa). Collagen-like domains lie at 530 to 584, 581 to 639, 607 to 664, and 641 to 698; these read GPMG…GADG, GADG…EIGP, PGDK…PGQP, and GLPG…GPQG. 2 stretches are compositionally biased toward gly residues: residues 539-548 and 581-590; these read GPVGGPGSAG and GADGGRGMPG. Allysine is present on lysine 610. Low complexity predominate over residues 639 to 655; the sequence is PRGLPGEAGPRGLLGPR. A compositionally biased stretch (pro residues) spans 697–708; that stretch reads QGLPGPQGPIGP. Low complexity predominate over residues 715–726; the sequence is QGKPGLAGLPGA. The Collagen-like 6 domain maps to 746 to 804; the sequence is GPPGPQGPIGYPGPRGVKGADGVRGLKGSKGEKGEDGFPGFKGDMGLKGDRGEVGQVGP. Over residues 805–814 the composition is skewed to basic and acidic residues; that stretch reads RGEDGPEGPK. Composition is skewed to low complexity over residues 873–901, 916–925, and 969–979; these read KPGPRGQRGPTGPRGSRGARGPTGKPGPK, RGPQGPQGPV, and PQGPTGETGPI. The segment covering 1040–1049 has biased composition (gly residues); that stretch reads GLKGGEGPQG. Pro residues predominate over residues 1074–1083; it reads RPGPQGPPGP. Positions 1084–1108 are enriched in low complexity; it reads AGEKGAPGEKGPQGPAGRDGVQGPV. Residues 1160-1169 show a composition bias toward gly residues; it reads GIAGGDGEAG. Pro residues-rich tracts occupy residues 1216 to 1227 and 1341 to 1360; these read MGPPGPPGPRGP and QPGPPGPSGEAGPPGPPGKR. Low complexity-rich tracts occupy residues 1383-1392 and 1417-1426; these read AEGPPGKTGP and QGLPGAAGQD. Collagen-like domains lie at 1391–1449, 1442–1492, and 1481–1539; these read GPVG…SKGE, GDPG…PGPA, and GAKG…PPGE. The span at 1428 to 1437 shows a compositional bias: pro residues; that stretch reads PPGPLGPPGL. Lysine 1450 is subject to Allysine. Low complexity predominate over residues 1453–1462; it reads PGLIGLIGPP. Positions 1481-1490 are enriched in gly residues; that stretch reads GAKGDGGIPG. A compositionally biased stretch (pro residues) spans 1491-1507; the sequence is PAGPIGPPGPPGLPGPA. Low complexity predominate over residues 1509-1519; sequence PKGNKGSSGPT. Over residues 1528-1537 the composition is skewed to pro residues; sequence PGPPGPPGPP. The tract at residues 1541-1561 is nonhelical region (C-terminal); it reads IQPLPILSPKKTRRHTESIQA. Positions 1562-1804 are cleaved as a propeptide — C-terminal propeptide; that stretch reads DAGDNILDYS…FEVGPACFLG (243 aa). The Fibrillar collagen NC1 domain occupies 1575-1803; it reads EEIFGSLNSL…GFEVGPACFL (229 aa). A disulfide bridge links cysteine 1605 with cysteine 1637. The Ca(2+) site is built by aspartate 1623, asparagine 1625, glutamine 1626, cysteine 1628, and aspartate 1631. N-linked (GlcNAc...) asparagine glycans are attached at residues asparagine 1638 and asparagine 1707. 2 cysteine pairs are disulfide-bonded: cysteine 1646–cysteine 1801 and cysteine 1712–cysteine 1755.

This sequence belongs to the fibrillar collagen family. As to quaternary structure, trimers composed of three different chains: alpha 1(XI), alpha 2(XI), and alpha 3(XI). Alpha 3(XI) is probably a post-translational modification of alpha 1(II). In terms of processing, prolines at the third position of the tripeptide repeating unit (G-X-Y) are hydroxylated in some or all of the chains. Post-translationally, N-glycosylated.

It is found in the secreted. Its subcellular location is the extracellular space. The protein resides in the extracellular matrix. Functionally, may play an important role in fibrillogenesis by controlling lateral growth of collagen II fibrils. In Rattus norvegicus (Rat), this protein is Collagen alpha-1(XI) chain (Col11a1).